Consider the following 199-residue polypeptide: Recombination protein RecR (199 aa).

The C4-type zinc finger occupies 57-72 (CRQCRVLTEEPVCGLC). In terms of domain architecture, Toprim spans 80-175 (SLLCVVEGPA…RTTRIAHGVP (96 aa)).

Belongs to the RecR family.

Functionally, may play a role in DNA repair. It seems to be involved in an RecBC-independent recombinational process of DNA repair. It may act with RecF and RecO. The chain is Recombination protein RecR from Alkalilimnicola ehrlichii (strain ATCC BAA-1101 / DSM 17681 / MLHE-1).